A 278-amino-acid polypeptide reads, in one-letter code: Diaminopimelate epimerase (278 aa).

Substrate is bound by residues asparagine 11 and asparagine 75. Cysteine 84 serves as the catalytic Proton donor. Residues glycine 85–asparagine 86, asparagine 160, asparagine 195, and glutamate 213–arginine 214 each bind substrate. Cysteine 222 (proton acceptor) is an active-site residue. Glycine 223 to threonine 224 contacts substrate.

It belongs to the diaminopimelate epimerase family. Homodimer.

It is found in the cytoplasm. The catalysed reaction is (2S,6S)-2,6-diaminopimelate = meso-2,6-diaminopimelate. It functions in the pathway amino-acid biosynthesis; L-lysine biosynthesis via DAP pathway; DL-2,6-diaminopimelate from LL-2,6-diaminopimelate: step 1/1. Catalyzes the stereoinversion of LL-2,6-diaminopimelate (L,L-DAP) to meso-diaminopimelate (meso-DAP), a precursor of L-lysine and an essential component of the bacterial peptidoglycan. This Corynebacterium aurimucosum (strain ATCC 700975 / DSM 44827 / CIP 107346 / CN-1) (Corynebacterium nigricans) protein is Diaminopimelate epimerase.